A 73-amino-acid polypeptide reads, in one-letter code: Translation initiation factor IF-1 (73 aa).

The region spanning 1 to 73 (MAKKDGVIEI…TRGRIVYRYK (73 aa)) is the S1-like domain.

The protein belongs to the IF-1 family. In terms of assembly, component of the 30S ribosomal translation pre-initiation complex which assembles on the 30S ribosome in the order IF-2 and IF-3, IF-1 and N-formylmethionyl-tRNA(fMet); mRNA recruitment can occur at any time during PIC assembly.

It is found in the cytoplasm. Its function is as follows. One of the essential components for the initiation of protein synthesis. Stabilizes the binding of IF-2 and IF-3 on the 30S subunit to which N-formylmethionyl-tRNA(fMet) subsequently binds. Helps modulate mRNA selection, yielding the 30S pre-initiation complex (PIC). Upon addition of the 50S ribosomal subunit IF-1, IF-2 and IF-3 are released leaving the mature 70S translation initiation complex. This Arthrobacter sp. (strain FB24) protein is Translation initiation factor IF-1.